We begin with the raw amino-acid sequence, 130 residues long: uncharacterized protein (130 aa).

2 helical membrane-spanning segments follow: residues 35–57 (FLIT…FISL) and 72–91 (IVFF…LLLL).

It localises to the cell membrane. This is an uncharacterized protein from Pasteurella multocida (strain Pm70).